Here is a 704-residue protein sequence, read N- to C-terminus: Phosphatidylinositol-3,5-bisphosphate 3-phosphatase MTMR8 (704 aa).

Residues 126 to 500 form the Myotubularin phosphatase domain; sequence GWKLIDPISD…YNIQFWCGMY (375 aa). The a 1,2-diacyl-sn-glycero-3-phospho-(1D-myo-inositol-3,5-bisphosphate) site is built by asparagine 250, asparagine 275, and isoleucine 276. A 1,2-diacyl-sn-glycero-3-phospho-(1D-myo-inositol-3-phosphate) is bound by residues asparagine 250, asparagine 275, and isoleucine 276. Catalysis depends on cysteine 338, which acts as the Phosphocysteine intermediate. Residues serine 339, aspartate 340, glycine 341, tryptophan 342, aspartate 343, arginine 344, lysine 380, and arginine 384 each contribute to the a 1,2-diacyl-sn-glycero-3-phospho-(1D-myo-inositol-3,5-bisphosphate) site. Serine 339, aspartate 340, glycine 341, tryptophan 342, aspartate 343, and arginine 344 together coordinate a 1,2-diacyl-sn-glycero-3-phospho-(1D-myo-inositol-3-phosphate). Residues serine 339 and aspartate 340 each coordinate phosphate. Residues tryptophan 342, aspartate 343, and arginine 344 each contribute to the phosphate site. Residue arginine 384 coordinates a 1,2-diacyl-sn-glycero-3-phospho-(1D-myo-inositol-3-phosphate). The stretch at 515 to 541 forms a coiled coil; sequence ESLLEIKKQRAMLETDVHELEKKLKVR.

The protein belongs to the protein-tyrosine phosphatase family. Non-receptor class myotubularin subfamily. In terms of assembly, homodimer. Heterodimer with MTMR9.

The protein localises to the nucleus envelope. It catalyses the reaction a 1,2-diacyl-sn-glycero-3-phospho-(1D-myo-inositol-3,5-bisphosphate) + H2O = a 1,2-diacyl-sn-glycero-3-phospho-(1D-myo-inositol-5-phosphate) + phosphate. It carries out the reaction a 1,2-diacyl-sn-glycero-3-phospho-(1D-myo-inositol-3-phosphate) + H2O = a 1,2-diacyl-sn-glycero-3-phospho-(1D-myo-inositol) + phosphate. The enzyme catalyses 1,2-dioctanoyl-sn-glycero-3-phospho-(1D-myo-inositol-3,5-bisphosphate) + H2O = 1,2-dioctanoyl-sn-glycero-3-phospho-(1D-myo-inositol-5-phosphate) + phosphate. Interaction with MTMR9 increases phosphatase activity. Functionally, lipid phosphatase that specifically dephosphorylates the D-3 position of phosphatidylinositol 3-phosphate and phosphatidylinositol 3,5-bisphosphate, generating phosphatidylinositol and phosphatidylinositol 5-phosphate. In complex with MTMR9, negatively regulates autophagy. The sequence is that of Phosphatidylinositol-3,5-bisphosphate 3-phosphatase MTMR8 from Homo sapiens (Human).